The primary structure comprises 830 residues: MGKKKKKRKSSAFKIILNVFLSIFLVAGVAFGGIVFAMIKTAPPLNVQQVLTFDEPSILYDDKGQYMDKVITNEQRIVVDYKNVPQNLKNAFVSIEDERFYKHHGVDIKRFTGVILINVTNKIKRSSKLQGASTLTQQLIKNTVLSSEVSIKRKVQEMYLSIQLEKELSKDEILGAYMNSIFLGGNALGVEAASKQYFNKSVKDLSLIECAFIAGVPQSPSVYYPYSSASKKNPSIYLNRTKTVLYKMLDNGYITQNDYNKALKDLDSKKLVFAKPSAPSNKLAYEWFSIPAIEQVKKDLKTQYKYDDKQIHNLLVNGGLKVYTTMNKNLQDKTQNTINNAYYLNSYKSNGMIYPQASAVIMDYHNGEVKTIIGGRGDQPARSYNRAASYNYLRPAGSSIKPLTVYSAAIDSKKATAATGFEDSPIPNNIGRKYSSGAPYNPKNSPDIYYGYVNVREALMRSINVVAVKLVDKIGLNTSIQYAEKFGIPIDQHDRSSIASLSLGELHKGTNPLIMAQAYGVFGNNGTYTEAKLYTKVVDRTGKVLLEPKTNTKKVLSPEAAFITYDMLQGPVSESGTGPQANFGNMEVRGKTGTSSDMKNLWFCGLTPYYSAAVWIGNDNSSTVDGVYSSTAARLWGDIMKEFHVNLPYKQVQKPASVVTANVDRISGKLPTQLSYRDPRGSTVYNEFFINGTIPTEYDDIHVEAQINKLTGKLASKFTPSFLVESRVFLRRDYSPGVELLDQQWLLPYSIDEGGSLPPTEEKNNSNTRDKNKDKNKNKNKDKNPSQDKPNNNNNDNNSNNNNNNNDNNNNTKPPENDSNQNHEDNKNKQ.

At 1–18 the chain is on the cytoplasmic side; sequence MGKKKKKRKSSAFKIILN. A helical; Signal-anchor for type II membrane protein membrane pass occupies residues 19 to 39; sequence VFLSIFLVAGVAFGGIVFAMI. Residues 40–830 are Extracellular-facing; that stretch reads KTAPPLNVQQ…QNHEDNKNKQ (791 aa). Positions 57-229 are transglycosylase; it reads SILYDDKGQY…PSVYYPYSSA (173 aa). The active-site Proton donor; for transglycosylase activity is the E96. The tract at residues 357-641 is transpeptidase; the sequence is ASAVIMDYHN…AARLWGDIMK (285 aa). S398 serves as the catalytic Acyl-ester intermediate; for transpeptidase activity. The disordered stretch occupies residues 754 to 830; the sequence is GGSLPPTEEK…QNHEDNKNKQ (77 aa). The segment covering 760–786 has biased composition (basic and acidic residues); it reads TEEKNNSNTRDKNKDKNKNKNKDKNPS. Positions 787-820 are enriched in low complexity; the sequence is QDKPNNNNNDNNSNNNNNNNDNNNNTKPPENDSN. Residues 821–830 are compositionally biased toward basic and acidic residues; it reads QNHEDNKNKQ.

It in the N-terminal section; belongs to the glycosyltransferase 51 family. In the C-terminal section; belongs to the transpeptidase family.

It is found in the cell membrane. The enzyme catalyses [GlcNAc-(1-&gt;4)-Mur2Ac(oyl-L-Ala-gamma-D-Glu-L-Lys-D-Ala-D-Ala)](n)-di-trans,octa-cis-undecaprenyl diphosphate + beta-D-GlcNAc-(1-&gt;4)-Mur2Ac(oyl-L-Ala-gamma-D-Glu-L-Lys-D-Ala-D-Ala)-di-trans,octa-cis-undecaprenyl diphosphate = [GlcNAc-(1-&gt;4)-Mur2Ac(oyl-L-Ala-gamma-D-Glu-L-Lys-D-Ala-D-Ala)](n+1)-di-trans,octa-cis-undecaprenyl diphosphate + di-trans,octa-cis-undecaprenyl diphosphate + H(+). It catalyses the reaction Preferential cleavage: (Ac)2-L-Lys-D-Ala-|-D-Ala. Also transpeptidation of peptidyl-alanyl moieties that are N-acyl substituents of D-alanine.. It participates in cell wall biogenesis; peptidoglycan biosynthesis. Its function is as follows. Cell wall formation. Synthesis of cross-linked peptidoglycan from the lipid intermediates. The enzyme has a penicillin-insensitive transglycosylase N-terminal domain (formation of linear glycan strands) and a penicillin-sensitive transpeptidase C-terminal domain (cross-linking of the peptide subunits). This is Penicillin-binding protein 1A (pbpA) from Clostridium botulinum (strain Hall / ATCC 3502 / NCTC 13319 / Type A).